The sequence spans 597 residues: UvrABC system protein C (597 aa).

Positions 15 to 93 constitute a GIY-YIG domain; sequence NSPGVYQYFD…IKKHQPRFNV (79 aa). Residues 207–242 form the UVR domain; sequence KDSLQRFRNQMKQHSEKMEFEDAQRIKNKIDVLENY.

The protein belongs to the UvrC family. As to quaternary structure, interacts with UvrB in an incision complex.

The protein localises to the cytoplasm. Functionally, the UvrABC repair system catalyzes the recognition and processing of DNA lesions. UvrC both incises the 5' and 3' sides of the lesion. The N-terminal half is responsible for the 3' incision and the C-terminal half is responsible for the 5' incision. This Christiangramia forsetii (strain DSM 17595 / CGMCC 1.15422 / KT0803) (Gramella forsetii) protein is UvrABC system protein C.